A 667-amino-acid chain; its full sequence is MSNAHHDAFDKATKAGFIIALGIVYGDIGTSPLYTMQSLVDNQGGLSQVSEAFILGSVSLIIWTLTLVTTIKYVLIALKADNHHEGGIFSLFTLVRRMSRWLIIPAMLGGATLLSDGALTPAVTVTSAIEGLKAVPELSSIYQNQTNVILTTLLILMVLFGLQRFGTGVIGKLFGPVMLVWFSVLGISGLLNSLQHLEILKAINPYYALHLLVSPENHRGIFILGSIFLATTGAEALYSDLGHVGRGNIYASWPFVKVCIILSYCGQAAWILAHKDSGIALNPFFASVPEGLRVYLVILATLAAIIASQALISGSFTLVSEAMRLKIFPLFKITYPGANLGQLYIPVINWSLFAVTSCTVLYFRTSAHMEAAYGLAITITMLMTTILLAYYLIKEGVKPLLASLLMAFFAFIEFIFFLASAVKFMHGGYVVVVLALAIVFVMVIWHAGTMIVAKYVKSLSLNDYKHQIKLLRDDLRFDLYQTNVVYLTNRMKKDLIDRSILYSILDKRPKRAQVYWFVNVRVTDEPYTATYKVDMLETDYIVCVELYLGFRMPQTVPRYLRTIVQDLMESGRLPKQAQDYTITPGREVGDFRFVIIEERVSHARQLSTLERFVMQTKASIKHVTASPMRWFGLQYSEATVEVVPLLLSDVLKLPIKEIKACTKDEKA.

A run of 12 helical transmembrane segments spans residues Gly16–Met36, Val58–Leu78, Trp101–Pro121, Thr146–Gly166, Thr167–Ile187, Ile221–Leu241, Trp253–Ala273, Val294–Gly314, Leu343–Phe363, Tyr373–Ile393, Pro399–Ala419, and Phe424–Ile444.

This sequence belongs to the HAK/KUP transporter (TC 2.A.72) family.

The protein localises to the cell membrane. It catalyses the reaction K(+)(in) + H(+)(in) = K(+)(out) + H(+)(out). Its function is as follows. Transport of potassium into the cell. Likely operates as a K(+):H(+) symporter. The protein is Probable potassium transport system protein Kup of Streptococcus equi subsp. equi (strain 4047).